The following is a 330-amino-acid chain: MSPLSAARAALRVYAVGAAVILAQLLRRCRGGFLEPVFPPRPDRVAIVTGGTDGIGYSTAKHLARLGMHVIIAGNNDSKAKQVVSKIKEETLNDKVEFLYCDLASMTSIRQFVQKFKMKKIPLHVLINNAGVMMVPQRKTRDGFEEHFGLNYLGHFLLTNLLLDTLKESGSPGHSARVVTVSSATHYVAELNMDDLQSSACYSPHAAYAQSKLALVLFTYHLQRLLAAEGSHVTANVVDPGVVNTDVYKHVFWATRLAKKLLGWLLFKTPDEGAWTSIYAAVTPELEGVGGHYLYNEKETKSLHVTYNQKLQQQLWSKSCEMTGVLDVTL.

4 residues coordinate NAD(+): Ile-55, Tyr-208, Lys-212, and Thr-245. The active-site Proton acceptor is the Tyr-208.

This sequence belongs to the short-chain dehydrogenases/reductases (SDR) family. Widely expressed. Highly expressed in the pancreas.

The protein resides in the lipid droplet. It is found in the secreted. The catalysed reaction is a di-trans,poly-cis-polyprenol + NAD(+) = a di-trans,poly-cis-polyprenal + NADH + H(+). It catalyses the reaction a di-trans,poly-cis-polyprenol + NADP(+) = a di-trans,poly-cis-polyprenal + NADPH + H(+). It carries out the reaction a di-trans,poly-cis-dolichol + NADP(+) = a di-trans,poly-cis-dolichal + NADPH + H(+). The enzyme catalyses a di-trans,poly-cis-dolichol + NAD(+) = a di-trans,poly-cis-dolichal + NADH + H(+). It functions in the pathway protein modification; protein glycosylation. Functionally, oxidoreductase that plays a key role in early steps of protein N-linked glycosylation by mediating two non-consecutive steps in dolichol biosynthesis. Acts both as a NAD(+)-dependent dehydrogenase and as a NADPH-dependent reductase during the conversion of polyprenol into dolichol. First catalyzes the NAD(+)-dependent dehydrogenation of polyprenol into polyprenal; polyprenal is then reduced into dolichal by SRD5A3. It then catalyzes the NADPH-dependent reduction of dolichal into dolichol. May also acts as a positive regulator of starvation-induced autophagy. This Homo sapiens (Human) protein is Polyprenol dehydrogenase.